Reading from the N-terminus, the 72-residue chain is Translation initiation factor IF-1 (72 aa).

In terms of domain architecture, S1-like spans 1–72 (MSKQSSIEQD…TKGRIVFRYK (72 aa)).

This sequence belongs to the IF-1 family. Component of the 30S ribosomal translation pre-initiation complex which assembles on the 30S ribosome in the order IF-2 and IF-3, IF-1 and N-formylmethionyl-tRNA(fMet); mRNA recruitment can occur at any time during PIC assembly.

The protein resides in the cytoplasm. One of the essential components for the initiation of protein synthesis. Stabilizes the binding of IF-2 and IF-3 on the 30S subunit to which N-formylmethionyl-tRNA(fMet) subsequently binds. Helps modulate mRNA selection, yielding the 30S pre-initiation complex (PIC). Upon addition of the 50S ribosomal subunit IF-1, IF-2 and IF-3 are released leaving the mature 70S translation initiation complex. This chain is Translation initiation factor IF-1, found in Cytophaga hutchinsonii (strain ATCC 33406 / DSM 1761 / CIP 103989 / NBRC 15051 / NCIMB 9469 / D465).